Consider the following 56-residue polypeptide: Small ribosomal subunit protein uS14 (56 aa).

Zn(2+) is bound by residues Cys-21, Cys-24, Cys-39, and Cys-42.

The protein belongs to the universal ribosomal protein uS14 family. As to quaternary structure, component of the 40S small ribosomal subunit. The cofactor is Zn(2+).

The protein localises to the cytoplasm. It is found in the cytosol. The protein resides in the rough endoplasmic reticulum. This is Small ribosomal subunit protein uS14 (RpS29) from Ixodes scapularis (Black-legged tick).